A 727-amino-acid chain; its full sequence is MSIFNKVTKSFQWGDKTVVMETGEIARQASGAVLVNIDDTVVLATVVGSKQAKPGQDFFPLTVDYIEKTYAAGKIPGSFFKREAKPSELETLTSRLIDRPIRPLFPEGFYNEVHVVIHTISLNPEVDADIAAMIAVSAALSVSGIPFNGPIGAARVGYVNGEYVLNPGQTARKSSQLDLVVAGTEAAVLMVESEAQQLSEEIMLGAVVFGHEQGKVAINAIHELVRDAGKPVWDWQPPAKDETFIAKVTALAEGKLRAAYQIRSKQARTQALREASASVLESLKGEGVEFDAVKVEALLFDIEAKIVRSQILAGEPRIDGRDTRTVRPIEIRNSVLPRTHGSALFTRGETQALVVSTLGTERDAQRIDALAGEFEDRFIFHYNMPPFATGEVGRMGSTKRREIGHGRLAKRALVACLPSKDEFPYTIRVVSEITESNGSSSMASVCGGCLSLMDAGVPMKAHVAGIAMGLIKEDNRFAVLTDILGDEDHLGDMDFKVAGTTNGITALQMDIKIQGITKEIMQVALAQAKEARMHILGKMQEAMGEAKTEISSFAPKLYTMKINPEKIRDVIGKGGATIRALTDETGCQINIEEDGTITIAATEAAKADEAKRRIEEITAEVEVGKIYEGPVTKILDFGALINLLPGKDGLLHISQIAHERVEKVGDYLQEGQIVKVKVLETDDKGRVKLSMKALADRPAGDSGRPAPAERGERRERRDGGASEQQQQ.

Mg(2+) contacts are provided by Asp488 and Asp494. The KH domain maps to 555–614; the sequence is PKLYTMKINPEKIRDVIGKGGATIRALTDETGCQINIEEDGTITIAATEAAKADEAKRRI. In terms of domain architecture, S1 motif spans 624-692; that stretch reads GKIYEGPVTK…DKGRVKLSMK (69 aa). The tract at residues 691 to 727 is disordered; sequence MKALADRPAGDSGRPAPAERGERRERRDGGASEQQQQ. Residues 707 to 720 show a composition bias toward basic and acidic residues; sequence PAERGERRERRDGG.

The protein belongs to the polyribonucleotide nucleotidyltransferase family. It depends on Mg(2+) as a cofactor.

The protein localises to the cytoplasm. The catalysed reaction is RNA(n+1) + phosphate = RNA(n) + a ribonucleoside 5'-diphosphate. Functionally, involved in mRNA degradation. Catalyzes the phosphorolysis of single-stranded polyribonucleotides processively in the 3'- to 5'-direction. The polypeptide is Polyribonucleotide nucleotidyltransferase (Acidovorax sp. (strain JS42)).